A 3526-amino-acid polypeptide reads, in one-letter code: WD repeat and FYVE domain-containing protein 3 (3526 aa).

2 positions are modified to phosphoserine: Ser-1942 and Ser-2278. The tract at residues 2285-2981 (LTGSRRNRKE…PHPPKRVRSR (697 aa)) is sufficient for localization to p62 bodies/ALIS. Disordered stretches follow at residues 2403 to 2429 (ETNV…PARY) and 2459 to 2522 (SSEG…EKTD). Residues 2468–2477 (EPEHGEDTIA) show a composition bias toward basic and acidic residues. Ser-2492 is modified (phosphoserine). The region spanning 2531–2656 (EEGEKIQHMY…IRNKVYQRFL (126 aa)) is the BEACH-type PH domain. The interval 2586–3526 (MHEPIIPRGA…RGSEDGPRNC (941 aa)) is interaction with SQSTM1. The 294-residue stretch at 2683–2976 (GLLSTLVGEK…QLFKKPHPPK (294 aa)) folds into the BEACH domain. Residues 2981–3526 (RLNGDNAGIS…RGSEDGPRNC (546 aa)) are interaction with ATG5. WD repeat units lie at residues 3077–3115 (SEWG…EKAK), 3125–3164 (GHTD…FLTQ), 3167–3206 (GHRA…VSVN), and 3210–3254 (GRSQ…VPET). A disordered region spans residues 3272-3335 (AQIGQEAQDE…SGSDDSRRWS (64 aa)). Acidic residues predominate over residues 3278–3290 (AQDEDSSDSEADE). Residues 3313–3363 (AASCRATAAWCTDSGSDDSRRWSDQLSLDEKDGFIFVNYSEGQTRAHLQGP) are interaction with GABARAP. Phosphoserine occurs at positions 3335 and 3339. Positions 3346 to 3349 (FIFV) match the LC3-interacting region (LIR) motif. One copy of the WD 5 repeat lies at 3408–3447 (AHPAEVTALGISKDHSRILVGDSRGRVFSWSVSDQPGRSA). The FYVE-type zinc finger occupies 3454 to 3514 (DEGGDSCSGC…VCQNCYYNLQ (61 aa)). Residues Cys-3460, Cys-3463, Cys-3476, Cys-3479, Cys-3484, Cys-3487, Cys-3506, and Cys-3509 each contribute to the Zn(2+) site.

Directly interacts with ATG5 and associates with the ATG12-ATG5-ATG16L complex. Interacts with p62/SQSTM1; this interaction is required to recruit WDFY3 to cytoplasmic bodies and to PML bodies. Directly interacts with GABARAP, GABARAPL1 and GABARAPL2; the interaction with GABARAP is required for WDFY3 recruitment to MAP1LC3B-positive p62/SQSTM1 bodies. Weakly interacts with MAP1LC3C; this interaction is direct. Does not interact with MAP1LC3A, nor MAP1LC3B. Interacts with TRAF6. As to expression, expressed in osteoclast and their mononuclear precursors (at protein level).

It localises to the nucleus membrane. The protein localises to the cytoplasm. The protein resides in the cytosol. Its subcellular location is the nucleus. It is found in the PML body. It localises to the membrane. The protein localises to the perikaryon. The protein resides in the cell projection. Its subcellular location is the axon. Functionally, required for selective macroautophagy (aggrephagy). Acts as an adapter protein by linking specific proteins destined for degradation to the core autophagic machinery members, such as the ATG5-ATG12-ATG16L E3-like ligase, SQSTM1 and LC3. Along with p62/SQSTM1, involved in the formation and autophagic degradation of cytoplasmic ubiquitin-containing inclusions (p62 bodies, ALIS/aggresome-like induced structures). Along with SQSTM1, required to recruit ubiquitinated proteins to PML bodies in the nucleus. Important for normal brain development. Essential for the formation of axonal tracts throughout the brain and spinal cord, including the formation of the major forebrain commissures. Involved in the ability of neural cells to respond to guidance cues. Required for cortical neurons to respond to the trophic effects of netrin-1/NTN1. Regulates Wnt signaling through the removal of DVL3 aggregates, likely in an autophagy-dependent manner. This process may be important for the determination of brain size during embryonic development. May regulate osteoclastogenesis by acting on the TNFSF11/RANKL - TRAF6 pathway. After cytokinetic abscission, involved in midbody remnant degradation. In vitro strongly binds to phosphatidylinositol 3-phosphate (PtdIns3P). This is WD repeat and FYVE domain-containing protein 3 (WDFY3) from Homo sapiens (Human).